Reading from the N-terminus, the 119-residue chain is Large ribosomal subunit protein uL18 (119 aa).

This sequence belongs to the universal ribosomal protein uL18 family. In terms of assembly, part of the 50S ribosomal subunit; part of the 5S rRNA/L5/L18/L25 subcomplex. Contacts the 5S and 23S rRNAs.

Functionally, this is one of the proteins that bind and probably mediate the attachment of the 5S RNA into the large ribosomal subunit, where it forms part of the central protuberance. In Clostridium botulinum (strain 657 / Type Ba4), this protein is Large ribosomal subunit protein uL18.